Consider the following 408-residue polypeptide: UPF0754 membrane protein Tery_3973 (408 aa).

2 consecutive transmembrane segments (helical) span residues 4-24 (IWLY…TNDI) and 385-405 (IVNL…ILLV).

Belongs to the UPF0754 family.

It localises to the cell inner membrane. The sequence is that of UPF0754 membrane protein Tery_3973 from Trichodesmium erythraeum (strain IMS101).